The chain runs to 140 residues: Cystatin-C (140 aa).

Positions 1–20 (MASPLRSLMLLLAVLAVAWA) are cleaved as a signal peptide. The Secondary area of contact signature appears at 75-79 (QLVAG). Disulfide bonds link cysteine 93-cysteine 103 and cysteine 117-cysteine 137. An N-linked (GlcNAc...) asparagine glycan is attached at asparagine 99.

This sequence belongs to the cystatin family.

It is found in the secreted. As an inhibitor of cysteine proteinases, this protein is thought to serve an important physiological role as a local regulator of this enzyme activity. Known to inhibit cathepsin B, H, and L. This Rattus norvegicus (Rat) protein is Cystatin-C (Cst3).